We begin with the raw amino-acid sequence, 481 residues long: Arginine biosynthesis bifunctional protein ArgJ, chloroplastic (481 aa).

Substrate contacts are provided by threonine 225, lysine 251, threonine 262, glutamate 349, asparagine 476, and threonine 481. Catalysis depends on threonine 262, which acts as the Nucleophile.

It belongs to the ArgJ family. In terms of assembly, heterodimer of an alpha and a beta chain.

The protein resides in the plastid. It localises to the chloroplast. It catalyses the reaction N(2)-acetyl-L-ornithine + L-glutamate = N-acetyl-L-glutamate + L-ornithine. The enzyme catalyses L-glutamate + acetyl-CoA = N-acetyl-L-glutamate + CoA + H(+). It participates in amino-acid biosynthesis; L-arginine biosynthesis; L-ornithine and N-acetyl-L-glutamate from L-glutamate and N(2)-acetyl-L-ornithine (cyclic): step 1/1. The protein operates within amino-acid biosynthesis; L-arginine biosynthesis; N(2)-acetyl-L-ornithine from L-glutamate: step 1/4. Catalyzes two activities which are involved in the cyclic version of arginine biosynthesis: the synthesis of acetylglutamate from glutamate and acetyl-CoA, and of ornithine by transacetylation between acetylornithine and glutamate. This chain is Arginine biosynthesis bifunctional protein ArgJ, chloroplastic, found in Populus trichocarpa (Western balsam poplar).